We begin with the raw amino-acid sequence, 131 residues long: Protein NEGATIVE REGULATOR OF RESISTANCE (131 aa).

2 disordered regions span residues 1-33 (MDAT…DEVS) and 51-131 (TRRL…RAPA). The Nuclear localization signal signature appears at 12–15 (KRKR). The span at 116-131 (PPSDAPATPRSARAPA) shows a compositional bias: low complexity.

It belongs to the NPR1-interactor family. Interacts with NPR1/NH1. Interacts with NPR2/NH2.

The protein localises to the nucleus. Acts as a negative regulator of disease resistance. Acts on basal resistance, age-related resistance and resistance mediated by the LRR receptor kinase XA21. Plants over-expressing NRR display enhanced susceptibility to the bacterial blight Xanthomonas oryzae pv. oryzae (Xoo). The chain is Protein NEGATIVE REGULATOR OF RESISTANCE from Oryza sativa subsp. indica (Rice).